The chain runs to 215 residues: 3-isopropylmalate dehydratase small subunit (215 aa).

This sequence belongs to the LeuD family. LeuD type 1 subfamily. Heterodimer of LeuC and LeuD.

The catalysed reaction is (2R,3S)-3-isopropylmalate = (2S)-2-isopropylmalate. The protein operates within amino-acid biosynthesis; L-leucine biosynthesis; L-leucine from 3-methyl-2-oxobutanoate: step 2/4. Functionally, catalyzes the isomerization between 2-isopropylmalate and 3-isopropylmalate, via the formation of 2-isopropylmaleate. The chain is 3-isopropylmalate dehydratase small subunit from Marinobacter nauticus (strain ATCC 700491 / DSM 11845 / VT8) (Marinobacter aquaeolei).